Reading from the N-terminus, the 667-residue chain is MIYKMAHVQLLLLYFFVSTVKAFYLPGVAPTTYRENDNIPLLVNHLTPSMNYQHKDEDGNNVSGDKENFLYSYDYYYNRFHFCQPEKVEKQPESLGSVIFGDRIYNSPFQLNMLQEKECESLCKTVIPGDDAKFINKLIKNGFFQNWLIDGLPAAREVYDGRTKTSFYGAGFNLGFVQVTQGTDIEATPKGAETTDKDVELETRNDRNMVKTYELPYFANHFDIMIEYHDRGEGNYRVVGVIVEPVSIKRSSPGTCETTGSPLMLDEGNDNEVYFTYSVKFNESATSWATRWDKYLHVYDPSIQWFSLINFSLVVVLLSSVVIHSLLRALKSDFARYNELNLDDDFQEDSGWKLNHGDVFRSPSQSLTLSILVGSGVQLFLMVTCSIFFAALGFLSPSSRGSLATVMFILYALFGFVGSYTSMGIYKFFNGPYWKANLILTPLLVPGAILLIIIALNFFLMFVHSSGVIPASTLFFMVFLWFLFSIPLSFAGSLIARKRCHWDEHPTKTNQIARQIPFQPWYLKTIPATLIAGIFPFGSIAVELYFIYTSLWFNKIFYMFGFLFFSFLLLTLTSSLVTILITYHSLCLENWKWQWRGFIIGGAGCALYVFIHSILFTKFKLGGFTTIVLYVGYSSVISLLCCLVTGSIGFISSMLFVRKIYSSIKVD.

Positions 1–22 are cleaved as a signal peptide; it reads MIYKMAHVQLLLLYFFVSTVKA. At 23 to 302 the chain is on the lumenal side; that stretch reads FYLPGVAPTT…DKYLHVYDPS (280 aa). 2 N-linked (GlcNAc...) asparagine glycosylation sites follow: Asn61 and Asn282. Residues 303-323 form a helical membrane-spanning segment; sequence IQWFSLINFSLVVVLLSSVVI. The Cytoplasmic portion of the chain corresponds to 324 to 370; it reads HSLLRALKSDFARYNELNLDDDFQEDSGWKLNHGDVFRSPSQSLTLS. Residues 371–391 traverse the membrane as a helical segment; that stretch reads ILVGSGVQLFLMVTCSIFFAA. The Lumenal segment spans residues 392–405; it reads LGFLSPSSRGSLAT. A helical transmembrane segment spans residues 406–426; the sequence is VMFILYALFGFVGSYTSMGIY. Residues 427–442 are Cytoplasmic-facing; it reads KFFNGPYWKANLILTP. The chain crosses the membrane as a helical span at residues 443–463; that stretch reads LLVPGAILLIIIALNFFLMFV. The Lumenal portion of the chain corresponds to 464–474; that stretch reads HSSGVIPASTL. Residues 475-495 form a helical membrane-spanning segment; sequence FFMVFLWFLFSIPLSFAGSLI. Topologically, residues 496–527 are cytoplasmic; sequence ARKRCHWDEHPTKTNQIARQIPFQPWYLKTIP. A helical membrane pass occupies residues 528–548; that stretch reads ATLIAGIFPFGSIAVELYFIY. The Lumenal segment spans residues 549–560; it reads TSLWFNKIFYMF. The helical transmembrane segment at 561–581 threads the bilayer; sequence GFLFFSFLLLTLTSSLVTILI. Topologically, residues 582–596 are cytoplasmic; that stretch reads TYHSLCLENWKWQWR. Residues 597–617 traverse the membrane as a helical segment; sequence GFIIGGAGCALYVFIHSILFT. The Lumenal portion of the chain corresponds to 618–635; sequence KFKLGGFTTIVLYVGYSS. Residues 636–656 traverse the membrane as a helical segment; sequence VISLLCCLVTGSIGFISSMLF. Over 657–667 the chain is Cytoplasmic; sequence VRKIYSSIKVD.

The protein belongs to the nonaspanin (TM9SF) (TC 9.A.2) family.

It localises to the endosome membrane. It is found in the vacuole membrane. Functionally, with TMN2 and TMN3, plays a critical role in the late stages of a nutrient-controlled pathway notably regulating FLO11 gene expression. Acts downstream of RAS2 and TOR. Essential for cell adhesion and filamentous growth. May play a role as effector of cellular copper homeostasis. The polypeptide is Transmembrane 9 superfamily member 1 (EMP70) (Saccharomyces cerevisiae (strain ATCC 204508 / S288c) (Baker's yeast)).